Here is an 85-residue protein sequence, read N- to C-terminus: Homeobox protein knotted-1-like 7 (85 aa).

An ELK domain is found at 1–21 (ELKNELKQGYKEKLVDIREEI). The homeobox; TALE-type DNA-binding region spans 22–85 (MRKRRAGKLP…NQRKRNWHSN (64 aa)).

Belongs to the TALE/KNOX homeobox family. Expressed in all tissues examined. Highest expression in leaves.

The protein resides in the nucleus. This Zea mays (Maize) protein is Homeobox protein knotted-1-like 7 (KNOX7).